Here is a 248-residue protein sequence, read N- to C-terminus: Pyridoxine 5'-phosphate synthase (248 aa).

Residue Asn-10 coordinates 3-amino-2-oxopropyl phosphate. A 1-deoxy-D-xylulose 5-phosphate-binding site is contributed by 12–13; that stretch reads DH. Arg-21 is a binding site for 3-amino-2-oxopropyl phosphate. The active-site Proton acceptor is His-46. Residues Arg-48 and His-53 each contribute to the 1-deoxy-D-xylulose 5-phosphate site. Catalysis depends on Glu-73, which acts as the Proton acceptor. Thr-103 provides a ligand contact to 1-deoxy-D-xylulose 5-phosphate. His-194 serves as the catalytic Proton donor. 3-amino-2-oxopropyl phosphate is bound by residues Gly-195 and 216–217; that span reads GH.

This sequence belongs to the PNP synthase family. As to quaternary structure, homooctamer; tetramer of dimers.

It is found in the cytoplasm. It catalyses the reaction 3-amino-2-oxopropyl phosphate + 1-deoxy-D-xylulose 5-phosphate = pyridoxine 5'-phosphate + phosphate + 2 H2O + H(+). It participates in cofactor biosynthesis; pyridoxine 5'-phosphate biosynthesis; pyridoxine 5'-phosphate from D-erythrose 4-phosphate: step 5/5. Functionally, catalyzes the complicated ring closure reaction between the two acyclic compounds 1-deoxy-D-xylulose-5-phosphate (DXP) and 3-amino-2-oxopropyl phosphate (1-amino-acetone-3-phosphate or AAP) to form pyridoxine 5'-phosphate (PNP) and inorganic phosphate. The sequence is that of Pyridoxine 5'-phosphate synthase from Legionella pneumophila (strain Paris).